A 400-amino-acid chain; its full sequence is Iron(III) enterobactin esterase (400 aa).

Belongs to the Fes family. In terms of assembly, monomer.

The protein localises to the cytoplasm. The catalysed reaction is Fe(III)-enterobactin + 3 H2O + H(+) = Fe(III)-[N-(2,3-dihydroxybenzoyl)-L-serine] + 2 N-(2,3-dihydroxybenzoyl)-L-serine. It carries out the reaction Fe(III)-enterobactin + H2O = Fe(III)-[N-(2,3-dihydroxybenzoyl)-L-serine]3 + H(+). It catalyses the reaction Fe(III)-[N-(2,3-dihydroxybenzoyl)-L-serine]3 + H2O + H(+) = Fe(III)-[N-(2,3-dihydroxybenzoyl)-L-serine]2 + N-(2,3-dihydroxybenzoyl)-L-serine. The enzyme catalyses Fe(III)-[N-(2,3-dihydroxybenzoyl)-L-serine]2 + H2O + H(+) = Fe(III)-[N-(2,3-dihydroxybenzoyl)-L-serine] + N-(2,3-dihydroxybenzoyl)-L-serine. The catalysed reaction is enterobactin + 3 H2O = 3 N-(2,3-dihydroxybenzoyl)-L-serine + 2 H(+). With respect to regulation, inhibited by N-ethylmaleimide. In terms of biological role, catalyzes the hydrolysis of ferric enterobactin (Fe-Ent). Is responsible for the release of iron from ferric enterobactin. Also catalyzes the hydrolysis of iron-free enterobactin (Ent). Cleavage of ferric enterobactin results in a mixture of three hydrolysis products, 2,3-dihydroxybenzoylserine (DHBS), the linear dimer (DHBS)2 and the linear trimer (DHBS)3, while cleavage of iron-free enterobactin yields only the monomer. Hydrolysis of ferric enterobactin is less efficient than hydrolysis of unliganded enterobactin. It also cleaves the aluminum (III) complex at a rate similar to the ferric complex. This chain is Iron(III) enterobactin esterase, found in Escherichia coli (strain K12).